A 147-amino-acid chain; its full sequence is Deoxyuridine 5'-triphosphate nucleotidohydrolase (147 aa).

Residues arginine 67–glycine 69, asparagine 80, and threonine 84–aspartate 86 contribute to the substrate site.

It belongs to the dUTPase family. The cofactor is Mg(2+).

It carries out the reaction dUTP + H2O = dUMP + diphosphate + H(+). Its pathway is pyrimidine metabolism; dUMP biosynthesis; dUMP from dCTP (dUTP route): step 2/2. This enzyme is involved in nucleotide metabolism: it produces dUMP, the immediate precursor of thymidine nucleotides and it decreases the intracellular concentration of dUTP so that uracil cannot be incorporated into DNA. This is Deoxyuridine 5'-triphosphate nucleotidohydrolase from Syntrophotalea carbinolica (strain DSM 2380 / NBRC 103641 / GraBd1) (Pelobacter carbinolicus).